The following is a 211-amino-acid chain: MEPAREPPARARPPPPAARPAPAAPRPRSPAEAEARGPEGLLRRSGSGYEGSTSWKAALEDTTTRLLLGAIAVLLFAILVVMSILASKGCIKCETPCPEDWLLYGRKCYYFSEEPRDWNTGRQYCHTHEAALAVIQSQKELEFMFKFTRREPWIGLRRVGDDFHWVNGDPFDPDTFTISGMGECVFVEPTRLVSTECLTTRPWVCSKMAYT.

Positions 1-53 (MEPAREPPARARPPPPAARPAPAAPRPRSPAEAEARGPEGLLRRSGSGYEGST) are disordered. Positions 10 to 28 (RARPPPPAARPAPAAPRPR) are enriched in pro residues. S29 is subject to Phosphoserine. Residues 66 to 86 (LLLGAIAVLLFAILVVMSILA) form a helical membrane-spanning segment. Residues 104–206 (YGRKCYYFSE…CLTTRPWVCS (103 aa)) form the C-type lectin domain. 2 disulfides stabilise this stretch: C125–C205 and C184–C197.

Its subcellular location is the membrane. This is C-type lectin domain family 2 member L (Clec2l) from Mus musculus (Mouse).